The sequence spans 215 residues: Deoxyribose-phosphate aldolase (215 aa).

D90 serves as the catalytic Proton donor/acceptor. K152 (schiff-base intermediate with acetaldehyde) is an active-site residue. The active-site Proton donor/acceptor is the K181.

It belongs to the DeoC/FbaB aldolase family. DeoC type 1 subfamily.

Its subcellular location is the cytoplasm. It carries out the reaction 2-deoxy-D-ribose 5-phosphate = D-glyceraldehyde 3-phosphate + acetaldehyde. It participates in carbohydrate degradation; 2-deoxy-D-ribose 1-phosphate degradation; D-glyceraldehyde 3-phosphate and acetaldehyde from 2-deoxy-alpha-D-ribose 1-phosphate: step 2/2. In terms of biological role, catalyzes a reversible aldol reaction between acetaldehyde and D-glyceraldehyde 3-phosphate to generate 2-deoxy-D-ribose 5-phosphate. The chain is Deoxyribose-phosphate aldolase from Ureaplasma urealyticum serovar 10 (strain ATCC 33699 / Western).